Here is a 111-residue protein sequence, read N- to C-terminus: Large ribosomal subunit protein P1 (111 aa).

Residues 75 to 111 form a disordered region; that stretch reads AAAPAAEEKAEEEKKEEEEEKKEEEVDLSGLSGMFGF. A compositionally biased stretch (acidic residues) spans 88 to 101; the sequence is KKEEEEEKKEEEVD.

This sequence belongs to the eukaryotic ribosomal protein P1/P2 family. Part of the 50S ribosomal subunit. Homodimer, it forms part of the ribosomal stalk which helps the ribosome interact with GTP-bound translation factors. Forms a heptameric uL10/P0(P1)2(P1)2(P1)2 complex, where uL10/P0 forms an elongated spine to which the P1 dimers bind in a sequential fashion.

Functionally, forms part of the ribosomal stalk, playing a central role in the interaction of the ribosome with GTP-bound translation factors. The sequence is that of Large ribosomal subunit protein P1 from Aeropyrum pernix (strain ATCC 700893 / DSM 11879 / JCM 9820 / NBRC 100138 / K1).